We begin with the raw amino-acid sequence, 481 residues long: RAC-alpha serine/threonine-protein kinase (481 aa).

Positions 5 to 108 (AIVKEGWLHK…WIQVIQHVAD (104 aa)) constitute a PH domain. Positions 120–141 (VRSGDSPSDNSGAEEMEVSHSK) are disordered. Residues Ser-127 and Ser-130 are each glycosylated (O-linked (GlcNAc) serine). Residues 151 to 409 (FEYLKLLGKG…AKEIMQHKFF (259 aa)) form the Protein kinase domain. Residues 157-165 (LGKGTFGKV) and Lys-180 each bind ATP. Asp-275 acts as the Proton acceptor in catalysis. O-linked (GlcNAc) threonine glycosylation is present at Thr-306. The residue at position 309 (Thr-309) is a Phosphothreonine; by PDPK1. Residue Thr-313 is glycosylated (O-linked (GlcNAc) threonine). Positions 410-481 (AGIVWQDVYE…QFSYSASGNA (72 aa)) constitute an AGC-kinase C-terminal domain. Phosphoserine is present on Ser-474. Ser-474 carries O-linked (GlcNAc) serine; alternate glycosylation. Tyr-475 carries the phosphotyrosine modification.

Belongs to the protein kinase superfamily. AGC Ser/Thr protein kinase family. RAC subfamily. Cleavage by caspase-3/CASP3. Cleaved at the caspase-3 consensus site Asp-463 during apoptosis, resulting in down-regulation of the AKT signaling pathway and decreased cell survival. In terms of processing, phosphorylation on Thr-309 and Ser-474 is required for full activity. Phosphorylation of the activation loop at Thr-309 by PDPK1/PDK1 is a prerequisite for full activation. Phosphorylation by mTORC2 at Ser-474 in response to growth factors plays a key role in AKT1 activation by facilitating subsequent phosphorylation of the activation loop by PDPK1/PDK1. As to expression, expressed in the oocyte.

The protein localises to the cytoplasm. It is found in the nucleus. It catalyses the reaction L-seryl-[protein] + ATP = O-phospho-L-seryl-[protein] + ADP + H(+). The catalysed reaction is L-threonyl-[protein] + ATP = O-phospho-L-threonyl-[protein] + ADP + H(+). With respect to regulation, activated in response to insulin. Three specific sites, one in the kinase domain (Thr-309) and the two other ones in the C-terminal regulatory region (Ser-474 and Tyr-475), need to be phosphorylated for its full activation. In terms of biological role, AKT1 is one of several closely related serine/threonine-protein kinases known as the AKT kinase, and which regulate many processes including metabolism, proliferation, cell survival, growth and angiogenesis. This is mediated through serine and/or threonine phosphorylation of a range of downstream substrates. Over 100 substrate candidates have been reported so far, but for most of them, no isoform specificity has been reported. Signals downstream of phosphatidylinositol 3-kinase (PI(3)K) to mediate the effects of various growth factors such as platelet-derived growth factor (PDGF), epidermal growth factor (EGF), insulin and insulin-like growth factor 1 (IGF1). Plays a role as a key modulator of the AKT-mTOR signaling pathway controlling the tempo of the process of newborn neurons integration during adult neurogenesis, including correct neuron positioning, dendritic development and synapse formation. Plays a role in glucose transport by mediating insulin-induced translocation of the GLUT4 glucose transporter to the cell surface. Mediates the antiapoptotic effects of IGF1. Mediates insulin-stimulated protein synthesis, partly by playing a role in both insulin-induced phosphorylation of 4E-BP1 and in insulin-induced activation of p70 S6 kinase. Promotes glycogen synthesis by mediating the insulin-induced activation of glycogen synthase. Required for insulin-stimulated meiotic reinitiation during oocyte maturation. May be involved in the regulation of vesicular functions such as preciliary trafficking and endocytic recycling. The polypeptide is RAC-alpha serine/threonine-protein kinase (Xenopus laevis (African clawed frog)).